The sequence spans 337 residues: Mitochondrial amidoxime-reducing component 1 (337 aa).

Gly2 is lipidated: N-myristoyl glycine. The Mitochondrial matrix portion of the chain corresponds to 2–20 (GAAGSSALARFVLLAQSRP). Residues 21 to 40 (GWLGVAALGLTAVALGAVAW) form a helical; Signal-anchor for type II membrane protein membrane-spanning segment. The Cytoplasmic segment spans residues 41 to 337 (RRAWPTRRRR…VGDPVYLLGQ (297 aa)). Mo-molybdopterin is bound by residues Lys67, Ser68, and Arg92. The interval 93–183 (FWLVINQEGN…KSQPYRLVHF (91 aa)) is MOSC N-terminal region. The region spanning 187-335 (MRPRRPHQIA…IKVGDPVYLL (149 aa)) is the MOSC domain. Residues Thr210, Ser211, Arg238, Asn240, Ser271, Arg272, Cys273, and Tyr317 each contribute to the Mo-molybdopterin site.

As to quaternary structure, component of a complex composed of cytochrome b5, NADH-cytochrome b5 reductase and MTARC1. Requires Mo-molybdopterin as cofactor.

The protein resides in the mitochondrion outer membrane. Its subcellular location is the membrane. It carries out the reaction N(omega)-hydroxy-L-arginine + 2 Fe(II)-[cytochrome b5] + 2 H(+) = L-arginine + 2 Fe(III)-[cytochrome b5] + H2O. In terms of biological role, catalyzes the reduction of N-oxygenated molecules, acting as a counterpart of cytochrome P450 and flavin-containing monooxygenases in metabolic cycles. As a component of prodrug-converting system, reduces a multitude of N-hydroxylated prodrugs particularly amidoximes, leading to increased drug bioavailability. May be involved in mitochondrial N(omega)-hydroxy-L-arginine (NOHA) reduction, regulating endogenous nitric oxide levels and biosynthesis. Postulated to cleave the N-OH bond of N-hydroxylated substrates in concert with electron transfer from NADH to cytochrome b5 reductase then to cytochrome b5, the ultimate electron donor that primes the active site for substrate reduction. In Homo sapiens (Human), this protein is Mitochondrial amidoxime-reducing component 1.